Reading from the N-terminus, the 208-residue chain is 3-demethoxyubiquinol 3-hydroxylase (208 aa).

Fe cation-binding residues include E57, E87, H90, E139, E171, and H174.

It belongs to the COQ7 family. Fe cation serves as cofactor.

The protein resides in the cell membrane. It carries out the reaction a 5-methoxy-2-methyl-3-(all-trans-polyprenyl)benzene-1,4-diol + AH2 + O2 = a 3-demethylubiquinol + A + H2O. It functions in the pathway cofactor biosynthesis; ubiquinone biosynthesis. Functionally, catalyzes the hydroxylation of 2-nonaprenyl-3-methyl-6-methoxy-1,4-benzoquinol during ubiquinone biosynthesis. The protein is 3-demethoxyubiquinol 3-hydroxylase of Burkholderia multivorans (strain ATCC 17616 / 249).